The following is a 137-amino-acid chain: uncharacterized protein (137 aa).

The N-terminal stretch at 1–19 (MVAFYGIFLFGTVYLFGLA) is a signal peptide.

This is an uncharacterized protein from Acanthamoeba polyphaga (Amoeba).